An 89-amino-acid chain; its full sequence is Large ribosomal subunit protein bL27 (89 aa).

Residues 1-20 (MAHKKAGGSSRNGRDSESKR) form a disordered region.

Belongs to the bacterial ribosomal protein bL27 family.

The chain is Large ribosomal subunit protein bL27 from Bartonella bacilliformis (strain ATCC 35685 / KC583 / Herrer 020/F12,63).